Consider the following 62-residue polypeptide: Large ribosomal subunit protein uL30 (62 aa).

Belongs to the universal ribosomal protein uL30 family. As to quaternary structure, part of the 50S ribosomal subunit.

The chain is Large ribosomal subunit protein uL30 from Geobacillus thermodenitrificans (strain NG80-2).